The sequence spans 1472 residues: ABC multidrug transporter atrI (1472 aa).

The disordered stretch occupies residues 1–28 (MRRSNVVPVHSLTSSTNTGRDSRGEKYD). The ABC transporter 1 domain occupies 134 to 384 (FRRETWNFRN…FERQGWFCPP (251 aa)). Asn-143, Asn-277, Asn-308, and Asn-332 each carry an N-linked (GlcNAc...) asparagine glycan. The next 7 helical transmembrane spans lie at 506 to 526 (ILAL…AGFY), 530 to 550 (ATLF…INSL), 580 to 600 (IPVK…LSGL), 605 to 625 (SQFF…SAVF), 639 to 659 (MTLA…VVPV), 664 to 684 (PWFK…ILIA), and 744 to 764 (FGIL…ATEL). The segment covering 784-793 (AHLKNGHEPG) has biased composition (basic and acidic residues). Residues 784 to 821 (AHLKNGHEPGADEEAGAGKTVVSSSAEENKQDQGITSI) are disordered. The span at 804 to 821 (VVSSSAEENKQDQGITSI) shows a compositional bias: polar residues. Positions 828–1070 (FTWRDVVYDI…TLLKYFESHG (243 aa)) constitute an ABC transporter 2 domain. 864–871 (GVSGAGKT) is an ATP binding site. Transmembrane regions (helical) follow at residues 1168 to 1188 (YIAA…FSFF), 1204 to 1224 (VFML…LFIT), 1244 to 1264 (FMIA…ILVF), 1282 to 1302 (LVLL…DFVI), 1309 to 1329 (ETAG…NGVM), and 1337 to 1357 (GFWI…GMAA). Residue Asn-1402 is glycosylated (N-linked (GlcNAc...) asparagine). Residues 1433–1453 (FGIFWAYVVFDIAVAVMLYYC) traverse the membrane as a helical segment. The N-linked (GlcNAc...) asparagine glycan is linked to Asn-1460.

The protein belongs to the ABC transporter superfamily. ABCG family. PDR (TC 3.A.1.205) subfamily.

The protein resides in the cell membrane. It catalyses the reaction itraconazole(in) + ATP + H2O = itraconazole(out) + ADP + phosphate + H(+). It carries out the reaction voriconazole(in) + ATP + H2O = voriconazole(out) + ADP + phosphate + H(+). The enzyme catalyses fluconazole(in) + ATP + H2O = fluconazole(out) + ADP + phosphate + H(+). Pleiotropic ABC efflux transporter involved in the basal level of azole susceptibility. Confers resistance to fluconazole, itraconazole and voriconazole. In Aspergillus fumigatus (strain ATCC MYA-4609 / CBS 101355 / FGSC A1100 / Af293) (Neosartorya fumigata), this protein is ABC multidrug transporter atrI.